The sequence spans 509 residues: Maturase K (509 aa).

The protein belongs to the intron maturase 2 family. MatK subfamily.

Its subcellular location is the plastid. The protein resides in the chloroplast. Usually encoded in the trnK tRNA gene intron. Probably assists in splicing its own and other chloroplast group II introns. In Citrus sinensis (Sweet orange), this protein is Maturase K.